Consider the following 297-residue polypeptide: Protease HtpX homolog (297 aa).

A helical membrane pass occupies residues isoleucine 16–valine 36. Histidine 134 provides a ligand contact to Zn(2+). Residue glutamate 135 is part of the active site. Zn(2+) is bound at residue histidine 138. A run of 2 helical transmembrane segments spans residues methionine 147 to phenylalanine 167 and isoleucine 175 to isoleucine 195. Residue glutamate 200 coordinates Zn(2+).

The protein belongs to the peptidase M48B family. Zn(2+) is required as a cofactor.

It localises to the cell inner membrane. The polypeptide is Protease HtpX homolog (Hyphomonas neptunium (strain ATCC 15444)).